A 451-amino-acid chain; its full sequence is Probable glycine dehydrogenase (decarboxylating) subunit 1 (451 aa).

Belongs to the GcvP family. N-terminal subunit subfamily. The glycine cleavage system is composed of four proteins: P, T, L and H. In this organism, the P 'protein' is a heterodimer of two subunits.

It carries out the reaction N(6)-[(R)-lipoyl]-L-lysyl-[glycine-cleavage complex H protein] + glycine + H(+) = N(6)-[(R)-S(8)-aminomethyldihydrolipoyl]-L-lysyl-[glycine-cleavage complex H protein] + CO2. Functionally, the glycine cleavage system catalyzes the degradation of glycine. The P protein binds the alpha-amino group of glycine through its pyridoxal phosphate cofactor; CO(2) is released and the remaining methylamine moiety is then transferred to the lipoamide cofactor of the H protein. This chain is Probable glycine dehydrogenase (decarboxylating) subunit 1, found in Thioalkalivibrio sulfidiphilus (strain HL-EbGR7).